A 372-amino-acid polypeptide reads, in one-letter code: MLVAVVKELKQGEGRVACTPENVRKLTDAGHKVIVEKNAGIGSGFSNDMYEKEGAKIVTHEQAWEADLVIKVKEPHESEYQYFKKNQIIWGFLHLASSKEIVEKMQEVGVTAISGETIIKNGKAELLAPMSAIAGQRSAIMGAYYSEAQHGGQGTLVTGVHENVDIPGSTYVIFGGGVAATNAANVALGLNAKVIIIELNDDRIKYLEDMYAEKDVTVVKSTPENLAEQIKKADVFISTILIPGAKPPKLVTREMVKSMKKGSVLIDIAIDQGGTIETIRPTTISDPVYEEEGVIHYGVPNQPGAVPRTSTMALAQGNIDYILEICDKGLEQAIKDNEALSTGVNIYQGQVTNQGLATSHDLDYKEILNVIE.

H94 is a catalytic residue. NAD(+) is bound at residue 170–200 (TYVIFGGGVAATNAANVALGLNAKVIIIELN).

The protein belongs to the AlaDH/PNT family.

It carries out the reaction L-alanine + NAD(+) + H2O = pyruvate + NH4(+) + NADH + H(+). It functions in the pathway amino-acid degradation; L-alanine degradation via dehydrogenase pathway; NH(3) and pyruvate from L-alanine: step 1/1. Functionally, may play a role in cell wall synthesis as L-alanine is an important constituent of the peptidoglycan layer. This is Alanine dehydrogenase 1 (ald1) from Staphylococcus aureus (strain MRSA252).